The sequence spans 424 residues: Serine--tRNA ligase (424 aa).

Position 230 to 232 (230 to 232 (TAE)) interacts with L-serine. 261 to 263 (RSE) contacts ATP. Position 284 (glutamate 284) interacts with L-serine. 348 to 351 (EISS) is an ATP binding site. Serine 384 contacts L-serine.

Belongs to the class-II aminoacyl-tRNA synthetase family. Type-1 seryl-tRNA synthetase subfamily. As to quaternary structure, homodimer. The tRNA molecule binds across the dimer.

The protein localises to the cytoplasm. It carries out the reaction tRNA(Ser) + L-serine + ATP = L-seryl-tRNA(Ser) + AMP + diphosphate + H(+). It catalyses the reaction tRNA(Sec) + L-serine + ATP = L-seryl-tRNA(Sec) + AMP + diphosphate + H(+). It functions in the pathway aminoacyl-tRNA biosynthesis; selenocysteinyl-tRNA(Sec) biosynthesis; L-seryl-tRNA(Sec) from L-serine and tRNA(Sec): step 1/1. Catalyzes the attachment of serine to tRNA(Ser). Is also able to aminoacylate tRNA(Sec) with serine, to form the misacylated tRNA L-seryl-tRNA(Sec), which will be further converted into selenocysteinyl-tRNA(Sec). The chain is Serine--tRNA ligase from Streptococcus pneumoniae (strain 70585).